The primary structure comprises 366 residues: Probable trehalose-phosphate phosphatase 3 (366 aa).

This sequence belongs to the trehalose phosphatase family. Requires a divalent metal cation as cofactor.

It catalyses the reaction alpha,alpha-trehalose 6-phosphate + H2O = alpha,alpha-trehalose + phosphate. The protein operates within glycan biosynthesis; trehalose biosynthesis. Functionally, removes the phosphate from trehalose 6-phosphate to produce free trehalose. Trehalose accumulation in plant may improve abiotic stress tolerance. The protein is Probable trehalose-phosphate phosphatase 3 (TPP3) of Oryza sativa subsp. japonica (Rice).